A 132-amino-acid chain; its full sequence is Small ribosomal subunit protein uS8c (132 aa).

It belongs to the universal ribosomal protein uS8 family. In terms of assembly, part of the 30S ribosomal subunit.

Its subcellular location is the plastid. It is found in the chloroplast. In terms of biological role, one of the primary rRNA binding proteins, it binds directly to 16S rRNA central domain where it helps coordinate assembly of the platform of the 30S subunit. The sequence is that of Small ribosomal subunit protein uS8c (rps8) from Illicium oligandrum (Star anise).